The chain runs to 461 residues: Probable tubulin polyglutamylase TTLL9 (461 aa).

The segment at 1-21 (MSRPKNQNYKGHGLQKGKERE) is disordered. Residues 22–402 (QRASIRFKTT…EARLTGREKR (381 aa)) enclose the TTL domain. Residues K149 and 155–156 (QG) contribute to the ATP site. Q155 is an a protein binding site. Residues 182–208 (SLEAQPARNTVNPSGSHDTRSSDDQKD) form a disordered region. Positions 188 to 197 (ARNTVNPSGS) are enriched in polar residues. Positions 198–208 (HDTRSSDDQKD) are enriched in basic and acidic residues. Residues 218–221 (QRYI) and 231–233 (KFD) each bind ATP. R257 contacts L-glutamate. 276 to 277 (TN) is an ATP binding site. An L-glutamate-binding site is contributed by K294. Residues D348, E361, and N363 each coordinate Mg(2+). K379 lines the L-glutamate pocket.

It belongs to the tubulin--tyrosine ligase family. Mg(2+) serves as cofactor.

Its subcellular location is the cytoplasm. It is found in the cytoskeleton. It localises to the cilium basal body. The protein resides in the flagellum axoneme. It catalyses the reaction (L-glutamyl)(n)-gamma-L-glutamyl-L-glutamyl-[protein] + L-glutamate + ATP = (L-glutamyl)(n+1)-gamma-L-glutamyl-L-glutamyl-[protein] + ADP + phosphate + H(+). Its function is as follows. Probable tubulin polyglutamylase that generates side chains of glutamate on the gamma-carboxyl group of specific glutamate residues within the C-terminal tail of target proteins. Similar to TTLL1, may acquire enzymatic activity only in complex with other proteins as it is most likely lacking domains important for autonomous activity. Mediates tubulin polyglutamylation which induces establishment of microtubule heterogeneity in sperm flagella, thereby playing a role in normal motile flagella axoneme structure and sperm flagella beating pattern. The sequence is that of Probable tubulin polyglutamylase TTLL9 (TTLL9) from Bos taurus (Bovine).